The chain runs to 329 residues: tRNA-modifying protein YgfZ (329 aa).

Folate-binding residues include Trp28 and Trp188.

This sequence belongs to the tRNA-modifying YgfZ family.

Its subcellular location is the cytoplasm. Its function is as follows. Folate-binding protein involved in regulating the level of ATP-DnaA and in the modification of some tRNAs. It is probably a key factor in regulatory networks that act via tRNA modification, such as initiation of chromosomal replication. This chain is tRNA-modifying protein YgfZ, found in Photorhabdus laumondii subsp. laumondii (strain DSM 15139 / CIP 105565 / TT01) (Photorhabdus luminescens subsp. laumondii).